Here is a 601-residue protein sequence, read N- to C-terminus: Putative purine permease C1399.01c (601 aa).

Transmembrane regions (helical) follow at residues 64-84 (VPVLLALLLGFQHALAMVGGV), 102-122 (TNYLVSAGLISSGIMTLIQIA), 131-151 (YYIGTGMLSVLGISFTSVSVA), 179-199 (YGAFLATACVCSLLEIFMSFI), 207-227 (LFPPIVTGPVVLLIGTSLISS), 264-284 (GWGSAQFIGLGFSVFATIIII), 294-314 (TTSVVLGLVVGMIISAATGYW), 337-357 (IYGPAVLPMLALYIVNMMEAI), 424-444 (FFCAVILFFMGLFAKFAAVFV), 450-470 (VLGGMTTFLFSSVAVSGIAII), 481-501 (FILTASMTLGMGAILVPDWFT), and 522-542 (LVMENGFAIGAFISIFLNLIL).

The protein belongs to the nucleobase:cation symporter-2 (NCS2) (TC 2.A.40) family.

It is found in the vacuole membrane. The chain is Putative purine permease C1399.01c from Schizosaccharomyces pombe (strain 972 / ATCC 24843) (Fission yeast).